The primary structure comprises 440 residues: 3-phosphoshikimate 1-carboxyvinyltransferase (440 aa).

Positions 31, 32, and 36 each coordinate 3-phosphoshikimate. Lysine 31 contributes to the phosphoenolpyruvate binding site. The phosphoenolpyruvate site is built by glycine 104 and arginine 133. 3-phosphoshikimate contacts are provided by serine 178, glutamine 180, aspartate 328, and lysine 355. Glutamine 180 is a phosphoenolpyruvate binding site. Aspartate 328 functions as the Proton acceptor in the catalytic mechanism. Phosphoenolpyruvate is bound by residues arginine 359 and arginine 401.

It belongs to the EPSP synthase family. In terms of assembly, monomer.

Its subcellular location is the cytoplasm. It catalyses the reaction 3-phosphoshikimate + phosphoenolpyruvate = 5-O-(1-carboxyvinyl)-3-phosphoshikimate + phosphate. The protein operates within metabolic intermediate biosynthesis; chorismate biosynthesis; chorismate from D-erythrose 4-phosphate and phosphoenolpyruvate: step 6/7. Functionally, catalyzes the transfer of the enolpyruvyl moiety of phosphoenolpyruvate (PEP) to the 5-hydroxyl of shikimate-3-phosphate (S3P) to produce enolpyruvyl shikimate-3-phosphate and inorganic phosphate. This Thermosynechococcus vestitus (strain NIES-2133 / IAM M-273 / BP-1) protein is 3-phosphoshikimate 1-carboxyvinyltransferase.